Consider the following 288-residue polypeptide: UTP--glucose-1-phosphate uridylyltransferase (288 aa).

Belongs to the UDPGP type 2 family.

The catalysed reaction is alpha-D-glucose 1-phosphate + UTP + H(+) = UDP-alpha-D-glucose + diphosphate. It functions in the pathway glycolipid metabolism; diglucosyl-diacylglycerol biosynthesis. In terms of biological role, catalyzes the formation of UDP-glucose from glucose-1-phosphate and UTP. This is an intermediate step in the biosynthesis of diglucosyl-diacylglycerol (Glc2-DAG), i.e. a glycolipid found in the membrane, which is also used as a membrane anchor for lipoteichoic acid (LTA). The chain is UTP--glucose-1-phosphate uridylyltransferase (gtaB) from Staphylococcus haemolyticus (strain JCSC1435).